Consider the following 485-residue polypeptide: UDP-N-acetylmuramoyl-L-alanyl-D-glutamate--2,6-diaminopimelate ligase (485 aa).

Serine 30 contributes to the UDP-N-acetyl-alpha-D-muramoyl-L-alanyl-D-glutamate binding site. 113–119 (GTNGKTT) lines the ATP pocket. Residues 155–156 (TT), serine 182, and arginine 190 each bind UDP-N-acetyl-alpha-D-muramoyl-L-alanyl-D-glutamate. N6-carboxylysine is present on lysine 222. Residues arginine 381, 405–408 (DNPR), glycine 455, and glutamate 459 each bind meso-2,6-diaminopimelate. The Meso-diaminopimelate recognition motif signature appears at 405–408 (DNPR).

It belongs to the MurCDEF family. MurE subfamily. Requires Mg(2+) as cofactor. Carboxylation is probably crucial for Mg(2+) binding and, consequently, for the gamma-phosphate positioning of ATP.

It is found in the cytoplasm. It carries out the reaction UDP-N-acetyl-alpha-D-muramoyl-L-alanyl-D-glutamate + meso-2,6-diaminopimelate + ATP = UDP-N-acetyl-alpha-D-muramoyl-L-alanyl-gamma-D-glutamyl-meso-2,6-diaminopimelate + ADP + phosphate + H(+). Its pathway is cell wall biogenesis; peptidoglycan biosynthesis. Its function is as follows. Catalyzes the addition of meso-diaminopimelic acid to the nucleotide precursor UDP-N-acetylmuramoyl-L-alanyl-D-glutamate (UMAG) in the biosynthesis of bacterial cell-wall peptidoglycan. This Clostridium tetani (strain Massachusetts / E88) protein is UDP-N-acetylmuramoyl-L-alanyl-D-glutamate--2,6-diaminopimelate ligase.